We begin with the raw amino-acid sequence, 92 residues long: Large ribosomal subunit protein bL34m (92 aa).

The N-terminal 46 residues, 1-46, are a transit peptide targeting the mitochondrion; it reads MAVLAGSLLGPTSRSAALLGGRWLQPRAWLGFPDAWGLPTPQQARG. The residue at position 71 (serine 71) is a Phosphoserine.

It belongs to the bacterial ribosomal protein bL34 family. In terms of assembly, component of the mitochondrial large ribosomal subunit (mt-LSU). Mature mammalian 55S mitochondrial ribosomes consist of a small (28S) and a large (39S) subunit. The 28S small subunit contains a 12S ribosomal RNA (12S mt-rRNA) and 30 different proteins. The 39S large subunit contains a 16S rRNA (16S mt-rRNA), a copy of mitochondrial valine transfer RNA (mt-tRNA(Val)), which plays an integral structural role, and 52 different proteins.

Its subcellular location is the mitochondrion. In Homo sapiens (Human), this protein is Large ribosomal subunit protein bL34m (MRPL34).